The primary structure comprises 293 residues: Energy-coupling factor transporter ATP-binding protein EcfA2 (293 aa).

The region spanning Ile-3–Asp-246 is the ABC transporter domain. Gly-40–Ser-47 is an ATP binding site.

It belongs to the ABC transporter superfamily. Energy-coupling factor EcfA family. In terms of assembly, forms a stable energy-coupling factor (ECF) transporter complex composed of 2 membrane-embedded substrate-binding proteins (S component), 2 ATP-binding proteins (A component) and 2 transmembrane proteins (T component).

The protein resides in the cell membrane. Functionally, ATP-binding (A) component of a common energy-coupling factor (ECF) ABC-transporter complex. Unlike classic ABC transporters this ECF transporter provides the energy necessary to transport a number of different substrates. This chain is Energy-coupling factor transporter ATP-binding protein EcfA2, found in Bacillus anthracis.